The following is a 615-amino-acid chain: Hypermethylated in cancer 2 protein (615 aa).

Residues 46 to 109 (CDVIIMVENS…IYTGKLLPSD (64 aa)) form the BTB domain. A disordered region spans residues 144-167 (KPFGSGRAGSTGMGRPPRSQRLST). Phosphoserine occurs at positions 166, 169, and 197. 2 disordered regions span residues 182–208 (RKGA…GSNQ) and 229–421 (GCSS…SGHA). Residues 246 to 250 (GLDLS) are binding to CtBP. Residues 280-296 (SPPAASAPPVANSASYS) show a composition bias toward low complexity. Over residues 336-356 (KKEWGKKEPVAGSPFERREAG) the composition is skewed to basic and acidic residues. Residue S348 is modified to Phosphoserine. Positions 379-388 (ASGAGPSGPY) are enriched in low complexity. Phosphoserine is present on S412. 5 consecutive C2H2-type zinc fingers follow at residues 442–469 (YVCI…EEEL), 505–532 (FKCS…LTRP), 533–560 (FPCN…GLKP), 561–588 (FACD…GEKP), and 589–615 (YECQ…TSPS).

The protein belongs to the krueppel C2H2-type zinc-finger protein family. Hic subfamily. As to quaternary structure, self-associates. Interacts with HIC1. Highest levels in cerebellum.

Its subcellular location is the nucleus. Transcriptional repressor. The chain is Hypermethylated in cancer 2 protein (HIC2) from Homo sapiens (Human).